The chain runs to 86 residues: Weak neurotoxin 5 (86 aa).

The signal sequence occupies residues 1–21; it reads MKTLLLTLVVVTIVCLDLGYT. 5 cysteine pairs are disulfide-bonded: Cys24–Cys45, Cys27–Cys32, Cys38–Cys63, Cys67–Cys78, and Cys79–Cys84.

It belongs to the three-finger toxin family. Ancestral subfamily. Orphan group II sub-subfamily. In terms of tissue distribution, expressed by the venom gland.

It is found in the secreted. Its function is as follows. Binds with low affinity to muscular and very low affinity to neuronal (alpha-7/CHRNA7) nicotinic acetylcholine receptor (nAChR). In Naja sputatrix (Malayan spitting cobra), this protein is Weak neurotoxin 5.